Reading from the N-terminus, the 207-residue chain is Small ribosomal subunit protein uS4 (207 aa).

Residues 31-53 (KAKFDSKPGQHGRTSGARTSDFG) form a disordered region. In terms of domain architecture, S4 RNA-binding spans 97–157 (SRLDNVVYRM…EKSKKQARIV (61 aa)).

The protein belongs to the universal ribosomal protein uS4 family. In terms of assembly, part of the 30S ribosomal subunit. Contacts protein S5. The interaction surface between S4 and S5 is involved in control of translational fidelity.

Its function is as follows. One of the primary rRNA binding proteins, it binds directly to 16S rRNA where it nucleates assembly of the body of the 30S subunit. Functionally, with S5 and S12 plays an important role in translational accuracy. This chain is Small ribosomal subunit protein uS4, found in Paracidovorax citrulli (strain AAC00-1) (Acidovorax citrulli).